The primary structure comprises 315 residues: Jacalin-related lectin 10 (315 aa).

Residues 1 to 23 form the signal peptide; the sequence is MVIIYIFLFLSSAIIDSTGLAKA. 2 Jacalin-type lectin domains span residues 24–165 and 168–312; these read QKLD…YLTT and PTKS…YFSP.

This sequence belongs to the jacalin lectin family.

This chain is Jacalin-related lectin 10 (JAL10), found in Arabidopsis thaliana (Mouse-ear cress).